The primary structure comprises 189 residues: Peptidyl-tRNA hydrolase (189 aa).

Position 14 (Tyr-14) interacts with tRNA. The active-site Proton acceptor is His-19. TRNA-binding residues include Tyr-64, Asn-66, and Asn-112.

Belongs to the PTH family. In terms of assembly, monomer.

It is found in the cytoplasm. The enzyme catalyses an N-acyl-L-alpha-aminoacyl-tRNA + H2O = an N-acyl-L-amino acid + a tRNA + H(+). Hydrolyzes ribosome-free peptidyl-tRNAs (with 1 or more amino acids incorporated), which drop off the ribosome during protein synthesis, or as a result of ribosome stalling. Its function is as follows. Catalyzes the release of premature peptidyl moieties from peptidyl-tRNA molecules trapped in stalled 50S ribosomal subunits, and thus maintains levels of free tRNAs and 50S ribosomes. In Dehalococcoides mccartyi (strain CBDB1), this protein is Peptidyl-tRNA hydrolase.